The chain runs to 316 residues: Ribosomal protein L11 methyltransferase (316 aa).

Positions 157, 178, 200, and 243 each coordinate S-adenosyl-L-methionine.

The protein belongs to the methyltransferase superfamily. PrmA family.

The protein resides in the cytoplasm. The enzyme catalyses L-lysyl-[protein] + 3 S-adenosyl-L-methionine = N(6),N(6),N(6)-trimethyl-L-lysyl-[protein] + 3 S-adenosyl-L-homocysteine + 3 H(+). In terms of biological role, methylates ribosomal protein L11. This is Ribosomal protein L11 methyltransferase from Streptococcus pneumoniae serotype 4 (strain ATCC BAA-334 / TIGR4).